A 1353-amino-acid polypeptide reads, in one-letter code: DNA-directed RNA polymerase subunit beta' (1353 aa).

Residues 1–117 (MSDNRLFTSV…AFQKLNDLFK (117 aa)) are unknown. Residues 118 to 1353 (LYNHFPSISS…SELTKKTNQN (1236 aa)) are DNA-directed RNA polymerase subunit beta'. Residues C189, C191, C203, and C206 each coordinate Zn(2+). Mg(2+)-binding residues include D578, D580, and D582.

It belongs to the RNA polymerase beta' chain family. The RNAP catalytic core consists of 2 alpha, 1 beta, 1 beta' and 1 omega subunit. When a sigma factor is associated with the core the holoenzyme is formed, which can initiate transcription. Requires Mg(2+) as cofactor. The cofactor is Zn(2+).

It carries out the reaction RNA(n) + a ribonucleoside 5'-triphosphate = RNA(n+1) + diphosphate. DNA-dependent RNA polymerase catalyzes the transcription of DNA into RNA using the four ribonucleoside triphosphates as substrates. The sequence is that of DNA-directed RNA polymerase subunit beta' from Aster yellows witches'-broom phytoplasma (strain AYWB).